We begin with the raw amino-acid sequence, 487 residues long: Malonate-semialdehyde dehydrogenase (487 aa).

7 residues coordinate NAD(+): Ala-150, Phe-152, Lys-176, Glu-179, Arg-180, Ser-229, and Thr-251. The active-site Nucleophile is the Cys-284. Residue Glu-382 coordinates NAD(+).

It belongs to the aldehyde dehydrogenase family. IolA subfamily. As to quaternary structure, homotetramer.

It catalyses the reaction 3-oxopropanoate + NAD(+) + CoA + H2O = hydrogencarbonate + acetyl-CoA + NADH + H(+). It carries out the reaction 2-methyl-3-oxopropanoate + NAD(+) + CoA + H2O = propanoyl-CoA + hydrogencarbonate + NADH + H(+). It functions in the pathway polyol metabolism; myo-inositol degradation into acetyl-CoA; acetyl-CoA from myo-inositol: step 7/7. In terms of biological role, catalyzes the oxidation of malonate semialdehyde (MSA) and methylmalonate semialdehyde (MMSA) into acetyl-CoA and propanoyl-CoA, respectively. Is involved in a myo-inositol catabolic pathway. Bicarbonate, and not CO2, is the end-product of the enzymatic reaction. The protein is Malonate-semialdehyde dehydrogenase of Bacillus velezensis (strain DSM 23117 / BGSC 10A6 / LMG 26770 / FZB42) (Bacillus amyloliquefaciens subsp. plantarum).